A 157-amino-acid chain; its full sequence is Large ribosomal subunit protein uL10 (157 aa).

It belongs to the universal ribosomal protein uL10 family. Part of the ribosomal stalk of the 50S ribosomal subunit. The N-terminus interacts with L11 and the large rRNA to form the base of the stalk. The C-terminus forms an elongated spine to which L12 dimers bind in a sequential fashion forming a multimeric L10(L12)X complex.

Forms part of the ribosomal stalk, playing a central role in the interaction of the ribosome with GTP-bound translation factors. This is Large ribosomal subunit protein uL10 from Campylobacter hominis (strain ATCC BAA-381 / DSM 21671 / CCUG 45161 / LMG 19568 / NCTC 13146 / CH001A).